A 1414-amino-acid chain; its full sequence is Protein KATNIP homolog (1414 aa).

Disordered stretches follow at residues 1 to 32, 80 to 116, 139 to 158, 712 to 731, 756 to 783, 823 to 861, and 924 to 943; these read MHGKSLGSSRKNDSRSKIRQEKESNIDFDEKH, QQSTQDLARESSKSSKIPDDGCSHLPGRRSQTAPGKI, GPNTKYSEDFESDDDMNEDQ, VSATSSKEPPPCPRDDNDLT, SSSSNFQQKSHNQPTKNHLNASSSTFTN, KMDNEDDLENFSNQSSYNSDRPVSGRRKTVQMQDKSEKY, and QQQKAGKQSDSTKNGSSLMP. Composition is skewed to basic and acidic residues over residues 10-32 and 86-101; these read RKNDSRSKIRQEKESNIDFDEKH and LARESSKSSKIPDDGC. Residues 147–158 are compositionally biased toward acidic residues; the sequence is DFESDDDMNEDQ. Polar residues-rich tracts occupy residues 832-843 and 924-940; these read NFSNQSSYNSDR and QQQKAGKQSDSTKNGSS.

It localises to the cytoplasm. The protein resides in the cytoskeleton. Its subcellular location is the cilium axoneme. The protein localises to the cilium basal body. In terms of biological role, may control cilium integrity. The sequence is that of Protein KATNIP homolog from Xenopus laevis (African clawed frog).